A 345-amino-acid polypeptide reads, in one-letter code: Protein RecA (345 aa).

ATP is bound at residue 80–87 (GPESSGKT).

Belongs to the RecA family.

The protein resides in the cytoplasm. Functionally, can catalyze the hydrolysis of ATP in the presence of single-stranded DNA, the ATP-dependent uptake of single-stranded DNA by duplex DNA, and the ATP-dependent hybridization of homologous single-stranded DNAs. It interacts with LexA causing its activation and leading to its autocatalytic cleavage. The chain is Protein RecA from Mycoplasma mycoides subsp. mycoides SC (strain CCUG 32753 / NCTC 10114 / PG1).